The following is a 249-amino-acid chain: Triosephosphate isomerase (249 aa).

Residue 9–11 (NWK) participates in substrate binding. H94 functions as the Electrophile in the catalytic mechanism. Catalysis depends on E166, which acts as the Proton acceptor. Residues G172, S211, and 232–233 (GG) each bind substrate.

Belongs to the triosephosphate isomerase family. In terms of assembly, homodimer.

It is found in the cytoplasm. The catalysed reaction is D-glyceraldehyde 3-phosphate = dihydroxyacetone phosphate. Its pathway is carbohydrate biosynthesis; gluconeogenesis. The protein operates within carbohydrate degradation; glycolysis; D-glyceraldehyde 3-phosphate from glycerone phosphate: step 1/1. Functionally, involved in the gluconeogenesis. Catalyzes stereospecifically the conversion of dihydroxyacetone phosphate (DHAP) to D-glyceraldehyde-3-phosphate (G3P). The polypeptide is Triosephosphate isomerase (Chromohalobacter salexigens (strain ATCC BAA-138 / DSM 3043 / CIP 106854 / NCIMB 13768 / 1H11)).